A 275-amino-acid polypeptide reads, in one-letter code: Large ribosomal subunit protein uL2 (275 aa).

Disordered stretches follow at residues 28–59 and 224–275; these read KPYA…GGHK and AMNP…RHKR. Residues 35–46 show a composition bias toward polar residues; sequence DTQSSTAGRNNN. Residues 50–59 are compositionally biased toward basic residues; the sequence is TTRHKGGGHK.

This sequence belongs to the universal ribosomal protein uL2 family. As to quaternary structure, part of the 50S ribosomal subunit. Forms a bridge to the 30S subunit in the 70S ribosome.

One of the primary rRNA binding proteins. Required for association of the 30S and 50S subunits to form the 70S ribosome, for tRNA binding and peptide bond formation. It has been suggested to have peptidyltransferase activity; this is somewhat controversial. Makes several contacts with the 16S rRNA in the 70S ribosome. In Paraburkholderia phymatum (strain DSM 17167 / CIP 108236 / LMG 21445 / STM815) (Burkholderia phymatum), this protein is Large ribosomal subunit protein uL2.